The following is a 373-amino-acid chain: tRNA 2-selenouridine synthase (373 aa).

A Rhodanese domain is found at 12–136 (FINDRPMMDA…MRGFLLETTE (125 aa)). Cys-95 functions as the S-selanylcysteine intermediate in the catalytic mechanism.

It belongs to the SelU family. Monomer.

It catalyses the reaction 5-methylaminomethyl-2-thiouridine(34) in tRNA + selenophosphate + (2E)-geranyl diphosphate + H2O + H(+) = 5-methylaminomethyl-2-selenouridine(34) in tRNA + (2E)-thiogeraniol + phosphate + diphosphate. It carries out the reaction 5-methylaminomethyl-2-thiouridine(34) in tRNA + (2E)-geranyl diphosphate = 5-methylaminomethyl-S-(2E)-geranyl-thiouridine(34) in tRNA + diphosphate. The catalysed reaction is 5-methylaminomethyl-S-(2E)-geranyl-thiouridine(34) in tRNA + selenophosphate + H(+) = 5-methylaminomethyl-2-(Se-phospho)selenouridine(34) in tRNA + (2E)-thiogeraniol. The enzyme catalyses 5-methylaminomethyl-2-(Se-phospho)selenouridine(34) in tRNA + H2O = 5-methylaminomethyl-2-selenouridine(34) in tRNA + phosphate. Functionally, involved in the post-transcriptional modification of the uridine at the wobble position (U34) of tRNA(Lys), tRNA(Glu) and tRNA(Gln). Catalyzes the conversion of 2-thiouridine (S2U-RNA) to 2-selenouridine (Se2U-RNA). Acts in a two-step process involving geranylation of 2-thiouridine (S2U) to S-geranyl-2-thiouridine (geS2U) and subsequent selenation of the latter derivative to 2-selenouridine (Se2U) in the tRNA chain. This chain is tRNA 2-selenouridine synthase, found in Ectopseudomonas mendocina (strain ymp) (Pseudomonas mendocina).